A 358-amino-acid chain; its full sequence is 3-isopropylmalate dehydrogenase (358 aa).

Residue 77 to 90 (GPKWTHLPPDQQPE) participates in NAD(+) binding. 4 residues coordinate substrate: R98, R108, R137, and D226. 3 residues coordinate Mg(2+): D226, D250, and D254. 284 to 296 (GSAPDIAGKGIAN) contacts NAD(+).

The protein belongs to the isocitrate and isopropylmalate dehydrogenases family. LeuB type 1 subfamily. As to quaternary structure, homodimer. It depends on Mg(2+) as a cofactor. Mn(2+) serves as cofactor.

Its subcellular location is the cytoplasm. It carries out the reaction (2R,3S)-3-isopropylmalate + NAD(+) = 4-methyl-2-oxopentanoate + CO2 + NADH. It participates in amino-acid biosynthesis; L-leucine biosynthesis; L-leucine from 3-methyl-2-oxobutanoate: step 3/4. Functionally, catalyzes the oxidation of 3-carboxy-2-hydroxy-4-methylpentanoate (3-isopropylmalate) to 3-carboxy-4-methyl-2-oxopentanoate. The product decarboxylates to 4-methyl-2 oxopentanoate. This is 3-isopropylmalate dehydrogenase from Mannheimia succiniciproducens (strain KCTC 0769BP / MBEL55E).